Reading from the N-terminus, the 386-residue chain is NADPH-dependent alkenal/one oxidoreductase, chloroplastic (386 aa).

The protein belongs to the zinc-containing alcohol dehydrogenase family. Quinone oxidoreductase subfamily.

The protein localises to the plastid. The protein resides in the chloroplast. In terms of biological role, reduces the double bond in short-chain unsaturated carbonyls. Acts preferentially on alpha,beta-unsaturated ketones rather on alpha,beta-unsaturated aldehydes. Has no activity with (E)-2-hexenal and (E)-2-pentenal. Contributes to detoxify stromal reactive carbonyls produced under oxidative stress. The protein is NADPH-dependent alkenal/one oxidoreductase, chloroplastic of Arabidopsis thaliana (Mouse-ear cress).